The sequence spans 388 residues: MRYLTAGESHGPSLTAIIEGIPAGLTLHPADIDHELQRRQGGYGRGARMSIETDRVQISSGVRHGKTTGAPITLTVINKDHQKWLDVMAVGDIEETLKLKRRVKHPRPGHADLVGGIKYHFNDLRDALERSSARETTMRVAVGAVAKRILAELGIDMLHHILIFGGITITIPSKLSFRELQERALHSELSIVNPKQEEEIKTYIDKIKKEGDTIGGIIETIVQGVPAGLGSYVQWDKKLDAKLAQAVLSINAFKGVEFGAGFDMGFQKGSQVMDEITWTPTQGYGRQTNHLGGFEGGMTTGQPLVVKGVMKPIPTLYKPLMSVDIDSHEPYKATVERSDPTALPAAGVIMENVVATVLAKEILETFSSTTMSELQKAFSDYRAYVKQF.

The NADP(+) site is built by arginine 39 and arginine 45. FMN-binding positions include 130-132, 251-252, glycine 296, 311-315, and arginine 337; these read RSS, NA, and KPIPT.

The protein belongs to the chorismate synthase family. In terms of assembly, homotetramer. It depends on FMNH2 as a cofactor.

It catalyses the reaction 5-O-(1-carboxyvinyl)-3-phosphoshikimate = chorismate + phosphate. Its pathway is metabolic intermediate biosynthesis; chorismate biosynthesis; chorismate from D-erythrose 4-phosphate and phosphoenolpyruvate: step 7/7. Functionally, catalyzes the anti-1,4-elimination of the C-3 phosphate and the C-6 proR hydrogen from 5-enolpyruvylshikimate-3-phosphate (EPSP) to yield chorismate, which is the branch point compound that serves as the starting substrate for the three terminal pathways of aromatic amino acid biosynthesis. This reaction introduces a second double bond into the aromatic ring system. The protein is Chorismate synthase of Streptococcus pyogenes serotype M1.